The following is a 400-amino-acid chain: tRNA (guanine-N(7)-)-methyltransferase (400 aa).

Residues glutamate 124, glutamate 149, and aspartate 176 each contribute to the S-adenosyl-L-methionine site. A substrate-binding site is contributed by aspartate 232.

Belongs to the class I-like SAM-binding methyltransferase superfamily. TrmB family.

It carries out the reaction guanosine(46) in tRNA + S-adenosyl-L-methionine = N(7)-methylguanosine(46) in tRNA + S-adenosyl-L-homocysteine. Its pathway is tRNA modification; N(7)-methylguanine-tRNA biosynthesis. Functionally, catalyzes the formation of N(7)-methylguanine at position 46 (m7G46) in tRNA. In Helicobacter pylori (strain J99 / ATCC 700824) (Campylobacter pylori J99), this protein is tRNA (guanine-N(7)-)-methyltransferase.